The sequence spans 139 residues: Sec-independent protein translocase protein TatB (139 aa).

Residues 1-21 (MFDMGFLELMLIGVVALLVLG) traverse the membrane as a helical segment. Positions 66-86 (QQRKLDAGLGKVRDEVERHGD) are enriched in basic and acidic residues. Positions 66 to 139 (QQRKLDAGLG…APSAKDSNAP (74 aa)) are disordered.

The protein belongs to the TatB family. In terms of assembly, the Tat system comprises two distinct complexes: a TatABC complex, containing multiple copies of TatA, TatB and TatC subunits, and a separate TatA complex, containing only TatA subunits. Substrates initially bind to the TatABC complex, which probably triggers association of the separate TatA complex to form the active translocon.

It localises to the cell inner membrane. Functionally, part of the twin-arginine translocation (Tat) system that transports large folded proteins containing a characteristic twin-arginine motif in their signal peptide across membranes. Together with TatC, TatB is part of a receptor directly interacting with Tat signal peptides. TatB may form an oligomeric binding site that transiently accommodates folded Tat precursor proteins before their translocation. The sequence is that of Sec-independent protein translocase protein TatB from Chromohalobacter salexigens (strain ATCC BAA-138 / DSM 3043 / CIP 106854 / NCIMB 13768 / 1H11).